The sequence spans 425 residues: Podosporapepsin (425 aa).

Positions 1–28 are cleaved as a signal peptide; it reads MVSLTDLFLASLLVPTSPWLCLPPRIDT. Positions 29-91 are cleaved as a propeptide — activation peptide; the sequence is IDQRGGRVTL…QEEAFARIKR (63 aa). In terms of domain architecture, Peptidase A1 spans 108–419; it reads YVTPVTIGTP…GTNPPRIGFA (312 aa). Residue Asp126 is part of the active site. N-linked (GlcNAc...) asparagine glycans are attached at residues Asn184 and Asn273. Asp310 is a catalytic residue. A disulfide bridge connects residues Cys346 and Cys381. An N-linked (GlcNAc...) asparagine glycan is attached at Asn370.

This sequence belongs to the peptidase A1 family.

The polypeptide is Podosporapepsin (PAPA) (Podospora anserina (Pleurage anserina)).